We begin with the raw amino-acid sequence, 257 residues long: Deoxyribose-phosphate aldolase (257 aa).

Aspartate 102 acts as the Proton donor/acceptor in catalysis. Lysine 166 acts as the Schiff-base intermediate with acetaldehyde in catalysis. Lysine 198 functions as the Proton donor/acceptor in the catalytic mechanism.

Belongs to the DeoC/FbaB aldolase family. DeoC type 2 subfamily.

It is found in the cytoplasm. The catalysed reaction is 2-deoxy-D-ribose 5-phosphate = D-glyceraldehyde 3-phosphate + acetaldehyde. The protein operates within carbohydrate degradation; 2-deoxy-D-ribose 1-phosphate degradation; D-glyceraldehyde 3-phosphate and acetaldehyde from 2-deoxy-alpha-D-ribose 1-phosphate: step 2/2. Functionally, catalyzes a reversible aldol reaction between acetaldehyde and D-glyceraldehyde 3-phosphate to generate 2-deoxy-D-ribose 5-phosphate. The sequence is that of Deoxyribose-phosphate aldolase from Aeromonas salmonicida (strain A449).